We begin with the raw amino-acid sequence, 342 residues long: MSEEHGHTPVMRDRMVELVGLGVNSENAPARPVIVDGTLGAGGHSEAFLDAFPHAIVVGLDRDPNALAEANARLARFGDRFVSYQTRFDGVTEALEDLMEQGKLPASVREHGISGFLFDLGVSSMQLDQPERGFAYAVDAPLDMRMDPSSPLTAAEILNTYSHGEIARILKTYGDERFAGKIASAVVREREKQPFENSARLVELLYATIPAASRRTGGHPAKRTFQALRVEVNAELESLENLIPEISRWLHVGAVGVFMSYQSLEDKIVKKALVQLSTSKTPPGLPMELPGMEAEFELRTRGAEKASEAEIEQNSRAAPVRVRAYSRVSDRGKTIFPLDTPS.

Residues glycine 42 to histidine 44, aspartate 61, phenylalanine 88, aspartate 119, and glutamine 126 contribute to the S-adenosyl-L-methionine site.

It belongs to the methyltransferase superfamily. RsmH family.

Its subcellular location is the cytoplasm. The catalysed reaction is cytidine(1402) in 16S rRNA + S-adenosyl-L-methionine = N(4)-methylcytidine(1402) in 16S rRNA + S-adenosyl-L-homocysteine + H(+). Specifically methylates the N4 position of cytidine in position 1402 (C1402) of 16S rRNA. In Corynebacterium jeikeium (strain K411), this protein is Ribosomal RNA small subunit methyltransferase H.